We begin with the raw amino-acid sequence, 428 residues long: Trigger factor (428 aa).

The PPIase FKBP-type domain occupies 163–248; sequence GDMVVIDYKG…VHEIKEKELP (86 aa).

Belongs to the FKBP-type PPIase family. Tig subfamily.

It localises to the cytoplasm. It carries out the reaction [protein]-peptidylproline (omega=180) = [protein]-peptidylproline (omega=0). Involved in protein export. Acts as a chaperone by maintaining the newly synthesized protein in an open conformation. Functions as a peptidyl-prolyl cis-trans isomerase. In Alkaliphilus metalliredigens (strain QYMF), this protein is Trigger factor.